Reading from the N-terminus, the 308-residue chain is Aspartate carbamoyltransferase catalytic subunit (308 aa).

Carbamoyl phosphate is bound by residues Arg49 and Thr50. An L-aspartate-binding site is contributed by Lys77. Positions 99, 127, and 130 each coordinate carbamoyl phosphate. Residues Arg160 and Arg211 each coordinate L-aspartate. Residues Ala252 and Pro253 each coordinate carbamoyl phosphate.

Belongs to the aspartate/ornithine carbamoyltransferase superfamily. ATCase family. As to quaternary structure, heterododecamer (2C3:3R2) of six catalytic PyrB chains organized as two trimers (C3), and six regulatory PyrI chains organized as three dimers (R2).

The enzyme catalyses carbamoyl phosphate + L-aspartate = N-carbamoyl-L-aspartate + phosphate + H(+). It functions in the pathway pyrimidine metabolism; UMP biosynthesis via de novo pathway; (S)-dihydroorotate from bicarbonate: step 2/3. In terms of biological role, catalyzes the condensation of carbamoyl phosphate and aspartate to form carbamoyl aspartate and inorganic phosphate, the committed step in the de novo pyrimidine nucleotide biosynthesis pathway. The sequence is that of Aspartate carbamoyltransferase catalytic subunit from Geobacillus kaustophilus (strain HTA426).